The chain runs to 294 residues: 4-hydroxy-tetrahydrodipicolinate synthase (294 aa).

Pyruvate is bound at residue threonine 45. Tyrosine 133 acts as the Proton donor/acceptor in catalysis. Catalysis depends on lysine 161, which acts as the Schiff-base intermediate with substrate. Isoleucine 203 serves as a coordination point for pyruvate.

It belongs to the DapA family. In terms of assembly, homotetramer; dimer of dimers.

It localises to the cytoplasm. The enzyme catalyses L-aspartate 4-semialdehyde + pyruvate = (2S,4S)-4-hydroxy-2,3,4,5-tetrahydrodipicolinate + H2O + H(+). It functions in the pathway amino-acid biosynthesis; L-lysine biosynthesis via DAP pathway; (S)-tetrahydrodipicolinate from L-aspartate: step 3/4. In terms of biological role, catalyzes the condensation of (S)-aspartate-beta-semialdehyde [(S)-ASA] and pyruvate to 4-hydroxy-tetrahydrodipicolinate (HTPA). This Shewanella pealeana (strain ATCC 700345 / ANG-SQ1) protein is 4-hydroxy-tetrahydrodipicolinate synthase.